The chain runs to 90 residues: Mucin-like protein 1 (90 aa).

The signal sequence occupies residues 1-20; the sequence is MKFLAVLVLLGVSIFLVSAQ. O-linked (GalNAc...) threonine glycosylation is found at Thr23, Thr24, Thr30, Thr34, Thr46, Thr47, Thr51, Thr52, Thr54, Thr55, Thr59, Thr60, Thr62, and Thr63. Low complexity-rich tracts occupy residues 25-36 and 44-68; these read AAPADTYPATGP and AETTAAATTATTAAPTTATTAASTT. Residues 25–68 form a disordered region; sequence AAPADTYPATGPADDEAPDAETTAAATTATTAAPTTATTAASTT. 3 tandem repeats follow at residues 46–53, 54–61, and 62–69. The interval 46 to 69 is 3 X 8 AA tandem repeat of T-T-A-A-[APS]-T-T-A; sequence TTAAATTATTAAPTTATTAASTTA. A glycan (O-linked (GalNAc...) serine) is linked at Ser66. 2 O-linked (GalNAc...) threonine glycosylation sites follow: Thr67 and Thr68.

O-glycosylated. In terms of tissue distribution, expressed in mammary, salivary glands and prostate. Also detected in lung. Mainly expressed in cancer cell lines of breast origin. Highly expressed in lymph node-positive compared with node-negative tumors. Detected in all lymph node containing metastatic cells.

The protein localises to the secreted. Its subcellular location is the membrane. May play a role as marker for the diagnosis of metastatic breast cancer. The chain is Mucin-like protein 1 (MUCL1) from Homo sapiens (Human).